Here is a 130-residue protein sequence, read N- to C-terminus: Large ribosomal subunit protein bL12 (130 aa).

Belongs to the bacterial ribosomal protein bL12 family. Homodimer. Part of the ribosomal stalk of the 50S ribosomal subunit. Forms a multimeric L10(L12)X complex, where L10 forms an elongated spine to which 2 to 4 L12 dimers bind in a sequential fashion. Binds GTP-bound translation factors.

Its function is as follows. Forms part of the ribosomal stalk which helps the ribosome interact with GTP-bound translation factors. Is thus essential for accurate translation. This Herpetosiphon aurantiacus (strain ATCC 23779 / DSM 785 / 114-95) protein is Large ribosomal subunit protein bL12.